A 94-amino-acid polypeptide reads, in one-letter code: Small ribosomal subunit protein uS19 (94 aa).

The protein belongs to the universal ribosomal protein uS19 family.

In terms of biological role, protein S19 forms a complex with S13 that binds strongly to the 16S ribosomal RNA. This chain is Small ribosomal subunit protein uS19, found in Dictyoglomus turgidum (strain DSM 6724 / Z-1310).